A 279-amino-acid polypeptide reads, in one-letter code: NH(3)-dependent NAD(+) synthetase (279 aa).

40–47 lines the ATP pocket; the sequence is GLSGGIDS. Mg(2+) is bound at residue aspartate 46. Position 122 (arginine 122) interacts with deamido-NAD(+). Threonine 142 is a binding site for ATP. Glutamate 147 is a binding site for Mg(2+). Residues lysine 155 and aspartate 162 each coordinate deamido-NAD(+). 2 residues coordinate ATP: lysine 171 and serine 193. 253 to 254 lines the deamido-NAD(+) pocket; sequence HK.

It belongs to the NAD synthetase family. In terms of assembly, homodimer.

The catalysed reaction is deamido-NAD(+) + NH4(+) + ATP = AMP + diphosphate + NAD(+) + H(+). Its pathway is cofactor biosynthesis; NAD(+) biosynthesis; NAD(+) from deamido-NAD(+) (ammonia route): step 1/1. Functionally, catalyzes the ATP-dependent amidation of deamido-NAD to form NAD. Uses ammonia as a nitrogen source. This Sulfurisphaera tokodaii (strain DSM 16993 / JCM 10545 / NBRC 100140 / 7) (Sulfolobus tokodaii) protein is NH(3)-dependent NAD(+) synthetase.